Consider the following 587-residue polypeptide: Pentatricopeptide repeat-containing protein OGR1, mitochondrial (587 aa).

The transit peptide at 1–30 (MSVSAAARHLESLLPRLASLRHYLQFHARL) directs the protein to the mitochondrion. PPR repeat units lie at residues 145 to 179 (DVRLLTTLLDSYAKCGDLASARKVFDEMTVRDVAT), 200 to 203 (FHRL), 217 to 251 (NEVTIVAALSACAQIGLLKDGMYVHEFAKRFGLDR), 252 to 286 (NVRVCNSLIDMYSKCGSLSRALDVFHSIKPEDQTL), 287 to 315 (VSYNAAIQAHSMHGHGGDALRLFDEMPTR), 319 to 349 (DGVTYLAVLCGCNHSGLVDDGLRVFNSMRVA), 351 to 381 (NMKHYGTIVDLLGRAGRLTEAYDTVISMPFP), and 383 to 417 (DIVLWQTLLGAAKMHGVVELAELAANKLAELGSNV). The interval 386–461 (LWQTLLGAAK…VPGFSYTEID (76 aa)) is type E motif. The interval 462 to 492 (GVMHKFINGDKEHPRWQEIYRALEDIVSRIS) is type E(+) motif. Positions 493–587 (ELGYEPETSN…DGQCSCRDYW (95 aa)) are type DYW motif.

It is found in the mitochondrion. Its function is as follows. Involved in multiple sites RNA editing events in mitochondria. Essential for C-to-U RNA editing at seven specific sites of nad2, nad4, cox2, cox3 and ccmC transcripts, all coding for proteins involved in the mitochondrial electron transport chain coupled to ATP generation. Required for normal growth and development. The protein is Pentatricopeptide repeat-containing protein OGR1, mitochondrial of Oryza sativa subsp. japonica (Rice).